The chain runs to 175 residues: ATP synthase subunit b 2 (175 aa).

Residues 20–40 traverse the membrane as a helical segment; sequence LIFWTTITFVLVLIILKKIAW.

The protein belongs to the ATPase B chain family. In terms of assembly, F-type ATPases have 2 components, F(1) - the catalytic core - and F(0) - the membrane proton channel. F(1) has five subunits: alpha(3), beta(3), gamma(1), delta(1), epsilon(1). F(0) has four main subunits: a(1), b(2) and c(10-14). The alpha and beta chains form an alternating ring which encloses part of the gamma chain. F(1) is attached to F(0) by a central stalk formed by the gamma and epsilon chains, while a peripheral stalk is formed by the delta and b chains.

Its subcellular location is the cell inner membrane. In terms of biological role, f(1)F(0) ATP synthase produces ATP from ADP in the presence of a proton or sodium gradient. F-type ATPases consist of two structural domains, F(1) containing the extramembraneous catalytic core and F(0) containing the membrane proton channel, linked together by a central stalk and a peripheral stalk. During catalysis, ATP synthesis in the catalytic domain of F(1) is coupled via a rotary mechanism of the central stalk subunits to proton translocation. Functionally, component of the F(0) channel, it forms part of the peripheral stalk, linking F(1) to F(0). The chain is ATP synthase subunit b 2 from Chlorobium luteolum (strain DSM 273 / BCRC 81028 / 2530) (Pelodictyon luteolum).